The sequence spans 346 residues: Anthranilate phosphoribosyltransferase (346 aa).

Residues glycine 81, glycine 84–aspartate 85, asparagine 91–threonine 94, lysine 109–serine 117, and serine 121 each bind 5-phospho-alpha-D-ribose 1-diphosphate. Glycine 81 is an anthranilate binding site. Mg(2+) is bound at residue serine 93. Asparagine 112 is a binding site for anthranilate. Arginine 167 contributes to the anthranilate binding site. Residues aspartate 226 and glutamate 227 each contribute to the Mg(2+) site.

Belongs to the anthranilate phosphoribosyltransferase family. Homodimer. Mg(2+) serves as cofactor.

It carries out the reaction N-(5-phospho-beta-D-ribosyl)anthranilate + diphosphate = 5-phospho-alpha-D-ribose 1-diphosphate + anthranilate. It functions in the pathway amino-acid biosynthesis; L-tryptophan biosynthesis; L-tryptophan from chorismate: step 2/5. Its function is as follows. Catalyzes the transfer of the phosphoribosyl group of 5-phosphorylribose-1-pyrophosphate (PRPP) to anthranilate to yield N-(5'-phosphoribosyl)-anthranilate (PRA). This chain is Anthranilate phosphoribosyltransferase, found in Hahella chejuensis (strain KCTC 2396).